Reading from the N-terminus, the 106-residue chain is MTTPRPSGLPSPYASDGSSANLADILERVLDKGVVIAGDIKINLLDIELLTIKLRLVVASVDRAKEMGIDWWESDPALSSRARGSELARENADLQRRIAELEGRTV.

The protein belongs to the gas vesicle GvpA family.

The protein localises to the gas vesicle. Its function is as follows. A minor component of the gas vesicle, might be involved in nucleating gas vesicle formation. Gas vesicles are hollow, gas filled proteinaceous nanostructures found in some microorganisms. It is not clear what function gas vesicles perform in soil bacteria. In Streptomyces sp. (strain CB03234), this protein is Gas vesicle protein J.